A 402-amino-acid polypeptide reads, in one-letter code: Multidrug resistance protein MdtH (402 aa).

The Cytoplasmic segment spans residues 1-12; that stretch reads MSRVSQARNLGK. Residues 13–33 traverse the membrane as a helical segment; that stretch reads YFLLIDNMLVVLGFFVVFPLI. Topologically, residues 34–98 are periplasmic; it reads SIRFVDQMGW…GFATMGIAHE (65 aa). A helical membrane pass occupies residues 99–116; the sequence is PWLLWFSCLLSGLGGTLF. The Cytoplasmic portion of the chain corresponds to 117-138; sequence DPPRSALVVKLIRPQQRGRFFS. Residues 139-159 form a helical membrane-spanning segment; sequence LLMMQDSAGAVIGALLGSWLL. Topologically, residues 160–164 are periplasmic; it reads QYDFR. A helical membrane pass occupies residues 165 to 185; that stretch reads LVCATGAVLFVLCAAFNAWLL. Residues 186-213 are Cytoplasmic-facing; the sequence is PAWKLSTVRTPVREGMTRVMRDKRFVTY. The chain crosses the membrane as a helical span at residues 214–234; the sequence is VLTLAGYYMLAVQVMLMLPIM. Residues 235–243 lie on the Periplasmic side of the membrane; that stretch reads VNDVAGAPS. The chain crosses the membrane as a helical span at residues 244 to 264; sequence AVKWMYAIEACLSLTLLYPIA. Over 265-276 the chain is Cytoplasmic; that stretch reads RWSEKHFRLEHR. The chain crosses the membrane as a helical span at residues 277-297; the sequence is LMAGLLIMSLSMMPVGMVSGL. Residues 298-299 lie on the Periplasmic side of the membrane; that stretch reads QQ. The chain crosses the membrane as a helical span at residues 300 to 320; that stretch reads LFTLICLFYIGSIIAEPARET. Topologically, residues 321–339 are cytoplasmic; the sequence is LSASLADARARGSYMGFSR. A helical membrane pass occupies residues 340–360; it reads LGLAIGGAIGYIGGGWLFDLG. Residues 361 to 367 lie on the Periplasmic side of the membrane; the sequence is KSAHQPE. The helical transmembrane segment at 368–388 threads the bilayer; sequence LPWMMLGIIGIFTFLALGWQF. Over 389-402 the chain is Cytoplasmic; it reads SQKRTARRLLERDA.

The protein belongs to the major facilitator superfamily. DHA1 family. MdtH (TC 2.A.1.2.21) subfamily.

Its subcellular location is the cell inner membrane. Confers resistance to norfloxacin and enoxacin. This is Multidrug resistance protein MdtH from Escherichia coli O7:K1 (strain IAI39 / ExPEC).